The following is a 208-amino-acid chain: uncharacterized protein (208 aa).

This is an uncharacterized protein from Acidianus sp. F28 (AFV-2).